We begin with the raw amino-acid sequence, 846 residues long: DNA mismatch repair protein MutS (846 aa).

Residue 594-601 (GPNMSGKS) participates in ATP binding.

This sequence belongs to the DNA mismatch repair MutS family.

Its function is as follows. This protein is involved in the repair of mismatches in DNA. It is possible that it carries out the mismatch recognition step. This protein has a weak ATPase activity. The sequence is that of DNA mismatch repair protein MutS from Macrococcus caseolyticus (strain JCSC5402) (Macrococcoides caseolyticum).